Here is a 119-residue protein sequence, read N- to C-terminus: NADH-quinone oxidoreductase subunit A (119 aa).

Transmembrane regions (helical) follow at residues F7–G27, L63–V83, and I88–A108.

This sequence belongs to the complex I subunit 3 family. NDH-1 is composed of 14 different subunits. Subunits NuoA, H, J, K, L, M, N constitute the membrane sector of the complex.

It localises to the cell inner membrane. It catalyses the reaction a quinone + NADH + 5 H(+)(in) = a quinol + NAD(+) + 4 H(+)(out). NDH-1 shuttles electrons from NADH, via FMN and iron-sulfur (Fe-S) centers, to quinones in the respiratory chain. The immediate electron acceptor for the enzyme in this species is believed to be ubiquinone. Couples the redox reaction to proton translocation (for every two electrons transferred, four hydrogen ions are translocated across the cytoplasmic membrane), and thus conserves the redox energy in a proton gradient. The chain is NADH-quinone oxidoreductase subunit A from Paraburkholderia phytofirmans (strain DSM 17436 / LMG 22146 / PsJN) (Burkholderia phytofirmans).